The following is a 349-amino-acid chain: Aminomethyltransferase (349 aa).

Belongs to the GcvT family. As to quaternary structure, the glycine cleavage system is composed of four proteins: P, T, L and H.

The enzyme catalyses N(6)-[(R)-S(8)-aminomethyldihydrolipoyl]-L-lysyl-[protein] + (6S)-5,6,7,8-tetrahydrofolate = N(6)-[(R)-dihydrolipoyl]-L-lysyl-[protein] + (6R)-5,10-methylene-5,6,7,8-tetrahydrofolate + NH4(+). Functionally, the glycine cleavage system catalyzes the degradation of glycine. This Thermus thermophilus (strain ATCC 27634 / DSM 579 / HB8) protein is Aminomethyltransferase.